The sequence spans 577 residues: Sulfite reductase [NADPH] hemoprotein beta-component 2 (577 aa).

[4Fe-4S] cluster is bound by residues C441, C447, C486, and C490. C490 serves as a coordination point for siroheme.

The protein belongs to the nitrite and sulfite reductase 4Fe-4S domain family. Alpha(8)-beta(8). The alpha component is a flavoprotein, the beta component is a hemoprotein. It depends on siroheme as a cofactor. [4Fe-4S] cluster is required as a cofactor.

The catalysed reaction is hydrogen sulfide + 3 NADP(+) + 3 H2O = sulfite + 3 NADPH + 4 H(+). It participates in sulfur metabolism; hydrogen sulfide biosynthesis; hydrogen sulfide from sulfite (NADPH route): step 1/1. Component of the sulfite reductase complex that catalyzes the 6-electron reduction of sulfite to sulfide. This is one of several activities required for the biosynthesis of L-cysteine from sulfate. The polypeptide is Sulfite reductase [NADPH] hemoprotein beta-component 2 (Pectobacterium carotovorum subsp. carotovorum (strain PC1)).